Consider the following 283-residue polypeptide: Protein-L-isoaspartate O-methyltransferase (283 aa).

S122 is an active-site residue.

Belongs to the methyltransferase superfamily. L-isoaspartyl/D-aspartyl protein methyltransferase family.

Its subcellular location is the cytoplasm. The enzyme catalyses [protein]-L-isoaspartate + S-adenosyl-L-methionine = [protein]-L-isoaspartate alpha-methyl ester + S-adenosyl-L-homocysteine. Functionally, catalyzes the methyl esterification of L-isoaspartyl residues in peptides and proteins that result from spontaneous decomposition of normal L-aspartyl and L-asparaginyl residues. It plays a role in the repair and/or degradation of damaged proteins. The polypeptide is Protein-L-isoaspartate O-methyltransferase (Leptothrix cholodnii (strain ATCC 51168 / LMG 8142 / SP-6) (Leptothrix discophora (strain SP-6))).